A 647-amino-acid polypeptide reads, in one-letter code: Phosphomethylpyrimidine synthase (647 aa).

Substrate-binding positions include Asn-235, Met-264, Tyr-293, His-329, 349–351 (SRG), 390–393 (DGLR), and Glu-429. His-433 is a binding site for Zn(2+). Tyr-456 is a substrate binding site. A Zn(2+)-binding site is contributed by His-497. [4Fe-4S] cluster is bound by residues Cys-577, Cys-580, and Cys-585. The disordered stretch occupies residues 623–647 (KSAEFKASGSELYHPAVSHEEVAEG).

It belongs to the ThiC family. Homodimer. The cofactor is [4Fe-4S] cluster.

It catalyses the reaction 5-amino-1-(5-phospho-beta-D-ribosyl)imidazole + S-adenosyl-L-methionine = 4-amino-2-methyl-5-(phosphooxymethyl)pyrimidine + CO + 5'-deoxyadenosine + formate + L-methionine + 3 H(+). It functions in the pathway cofactor biosynthesis; thiamine diphosphate biosynthesis. Catalyzes the synthesis of the hydroxymethylpyrimidine phosphate (HMP-P) moiety of thiamine from aminoimidazole ribotide (AIR) in a radical S-adenosyl-L-methionine (SAM)-dependent reaction. This is Phosphomethylpyrimidine synthase from Vibrio vulnificus (strain CMCP6).